The chain runs to 409 residues: MASGKATGKTDAPAPVIKLGGPKPPKVGSSGNASWFQAIKAKKLNSPPLKFEGSGVPDNENLKTSQQHGYWRRQARFKPSKGGRKPVPDAWYFYYTGTGPAADLNWGDSQDGIVWVAAKGADTKSRSNQGTRDPDKFDQYPLRFSDGGPDGNFRWDFIPLNRGRSGKSTAASSAASSRAPSREGSRGRRSGAEDDLIARAAKIIQDQQKKGARITKAKADEMAHRRYCKRTIPPGYKVDQVFGPRTKGKEGNFGDDKMNEEGIKDGRVTAMLNLVPSSHACLFGSRVTPKLQPDGLHLKFEFTTVVSRNDPQFDNYVKICDQCVDGVGTRPKDDEPKPKSRSSSRPATRTSSPAPRQPRPKKEKKTKKQDDEVDKALTSDEERNNAQLEFDDEPKVINWGDSALGENEL.

4 disordered regions span residues 1–32 (MASGKATGKTDAPAPVIKLGGPKPPKVGSSGN), 46–69 (SPPLKFEGSGVPDNENLKTSQQHG), 120–193 (GADT…SGAE), and 238–259 (VDQVFGPRTKGKEGNFGDDKMN). The segment covering 15–31 (PVIKLGGPKPPKVGSSG) has biased composition (low complexity). The segment at 29–160 (SSGNASWFQA…GNFRWDFIPL (132 aa)) is RNA-binding. Residues 31 to 156 (GNASWFQAIK…GGPDGNFRWD (126 aa)) enclose the CoV N NTD domain. Residues 162–179 (RGRSGKSTAASSAASSRA) show a composition bias toward low complexity. Composition is skewed to basic and acidic residues over residues 180–192 (PSREGSRGRRSGA) and 247–259 (KGKEGNFGDDKMN). Position 190 is a phosphoserine; by host (Ser190). The CoV N CTD domain maps to 215–331 (TKAKADEMAH…QCVDGVGTRP (117 aa)). Residues 226–333 (RYCKRTIPPG…VDGVGTRPKD (108 aa)) form a dimerization region. Cys320 and Cys323 are disulfide-bonded. The segment at 327–409 (VGTRPKDDEP…GDSALGENEL (83 aa)) is disordered. Positions 341–354 (RSSSRPATRTSSPA) are enriched in low complexity. Basic residues predominate over residues 358–367 (PRPKKEKKTK). Over residues 368 to 384 (KQDDEVDKALTSDEERN) the composition is skewed to basic and acidic residues. Thr378 carries the post-translational modification Phosphothreonine; by host. Ser379 is subject to Phosphoserine; by host.

Belongs to the gammacoronavirus nucleocapsid protein family. Homooligomer. Both monomeric and oligomeric forms interact with RNA. Interacts with protein M. Interacts with NSP3; this interaction serves to tether the genome to the newly translated replicase-transcriptase complex at a very early stage of infection. Post-translationally, ADP-ribosylated. The ADP-ribosylation is retained in the virion during infection. Phosphorylated on serine and threonine residues.

The protein localises to the virion. Its subcellular location is the host endoplasmic reticulum-Golgi intermediate compartment. It is found in the host Golgi apparatus. In terms of biological role, packages the positive strand viral genome RNA into a helical ribonucleocapsid (RNP) and plays a fundamental role during virion assembly through its interactions with the viral genome and membrane protein M. Plays an important role in enhancing the efficiency of subgenomic viral RNA transcription as well as viral replication. The polypeptide is Nucleoprotein (Gallus gallus (Chicken)).